The sequence spans 159 residues: Cytochrome c-type biogenesis protein CcmE (159 aa).

The Cytoplasmic portion of the chain corresponds to 1–8; the sequence is MNLRRKNR. Residues 9–29 traverse the membrane as a helical; Signal-anchor for type II membrane protein segment; sequence LWVVCAVLAGLALTTALVLYA. The Periplasmic segment spans residues 30 to 159; sequence LRANIDLFYT…PQRADKDTSS (130 aa). Residues 129-159 are disordered; sequence KHDENYTPPEVEKAMQENHRRPQRADKDTSS. Residues His-130 and Tyr-134 each coordinate heme.

The protein belongs to the CcmE/CycJ family.

Its subcellular location is the cell inner membrane. In terms of biological role, heme chaperone required for the biogenesis of c-type cytochromes. Transiently binds heme delivered by CcmC and transfers the heme to apo-cytochromes in a process facilitated by CcmF and CcmH. This Salmonella paratyphi A (strain ATCC 9150 / SARB42) protein is Cytochrome c-type biogenesis protein CcmE.